The primary structure comprises 218 residues: Ribose-5-phosphate isomerase A (218 aa).

Substrate-binding positions include Thr-28–Thr-31, Asp-81–Asp-84, and Lys-94–Gly-97. The Proton acceptor role is filled by Glu-103. Lys-121 contributes to the substrate binding site.

It belongs to the ribose 5-phosphate isomerase family. Homodimer.

It catalyses the reaction aldehydo-D-ribose 5-phosphate = D-ribulose 5-phosphate. The protein operates within carbohydrate degradation; pentose phosphate pathway; D-ribose 5-phosphate from D-ribulose 5-phosphate (non-oxidative stage): step 1/1. In terms of biological role, catalyzes the reversible conversion of ribose-5-phosphate to ribulose 5-phosphate. This Vibrio atlanticus (strain LGP32) (Vibrio splendidus (strain Mel32)) protein is Ribose-5-phosphate isomerase A.